The primary structure comprises 114 residues: DNA-directed RNA polymerase subunit omega (114 aa).

This sequence belongs to the RNA polymerase subunit omega family. As to quaternary structure, the RNAP catalytic core consists of 2 alpha, 1 beta, 1 beta' and 1 omega subunit. When a sigma factor is associated with the core the holoenzyme is formed, which can initiate transcription.

It catalyses the reaction RNA(n) + a ribonucleoside 5'-triphosphate = RNA(n+1) + diphosphate. Its function is as follows. Promotes RNA polymerase assembly. Latches the N- and C-terminal regions of the beta' subunit thereby facilitating its interaction with the beta and alpha subunits. This is DNA-directed RNA polymerase subunit omega from Erythrobacter litoralis (strain HTCC2594).